A 434-amino-acid chain; its full sequence is MKRKIIAISLFLYIPLSNADNWESITKSYYTGFAMSKTVESKDQDGKTVRKEVITQADLTTACNDAKASAQDVFNQMKLTFSGIWPDSQFRLVTGDTCVYNGSPSEKTESWSIRAQVEGDMQRSVPDEEPSEQTPEEICEAKPPIDGVFNNVSKGDEGGFYINYNGCEYEATGVTVCQNDGTVCASSAWKPTGYVPESGESSSSPVKDGDTGGTGEGGSDTGGDTGGGDTGGGSTGGDTGGSTGGGSTGGGSTGGSTGKSLTKEDVTAAIHDASPSIGDAVKDSLTEDNDQNDNQKKADEQSAKASASVSDAISDGMRGVGNFVDDLGGESSQYGIGNSEMDLSVSLAKGQLGIDLEGHGSAWESFLNDGALRPSIPSGHGCTDFVMFQGSVYQLDIGCDKLGDIKSVLSWVMYCLTFWYVFQSATSLLRKGEQ.

A signal peptide spans 1 to 19; the sequence is MKRKIIAISLFLYIPLSNA. The interval 19 to 88 is N1; sequence ADNWESITKS…LTFSGIWPDS (70 aa). A disulfide bridge links Cys63 with Cys98. Residues 89–107 form a G1 (Gly-rich linker) region; it reads QFRLVTGDTCVYNGSPSEK. A disordered region spans residues 118–137; it reads EGDMQRSVPDEEPSEQTPEE. The span at 127–137 shows a compositional bias: acidic residues; the sequence is DEEPSEQTPEE. Positions 132-200 are N2; that stretch reads EQTPEEICEA…PTGYVPESGE (69 aa). Disulfide bonds link Cys139-Cys167 and Cys177-Cys184. 2 disordered regions span residues 191-260 and 272-311; these read PTGY…TGKS and DASPSIGDAVKDSLTEDNDQNDNQKKADEQSAKASASVSD. Residues 193 to 206 show a composition bias toward low complexity; that stretch reads GYVPESGESSSSPV. A compositionally biased stretch (gly residues) spans 211 to 257; that stretch reads TGGTGEGGSDTGGDTGGGDTGGGSTGGDTGGSTGGGSTGGGSTGGST. Residues 252–434 form a CT region; the sequence is STGGSTGKSL…ATSLLRKGEQ (183 aa). Over residues 293–302 the composition is skewed to basic and acidic residues; it reads DNQKKADEQS. Residues 408 to 429 form a helical membrane-spanning segment; that stretch reads VLSWVMYCLTFWYVFQSATSLL.

It belongs to the inovirus G3P protein family. As to quaternary structure, interacts with G6P; this interaction is required for proper integration of G3P and G6P into the virion. Interacts with G8P. Interacts with the tip of the host pilus. Interacts (via N-terminus) with host TolA.

It is found in the virion. Its subcellular location is the host membrane. In terms of biological role, plays essential roles both in the penetration of the viral genome into the bacterial host via pilus retraction and in the extrusion process. During the initial step of infection, G3P mediates adsorption of the phage to its primary receptor, the tip of host I-pilus. Attachment of the phage causes pilus retraction bringing the viral particle into close proximity of the host cell inner membrane. Subsequent interaction with the host entry receptor tolA induces penetration of the viral DNA into the host cytoplasm. In the extrusion process, G3P mediates the release of the membrane-anchored virion from the cell via its C-terminal domain. In Escherichia coli (Bacteriophage I2-2), this protein is Attachment protein G3P (III).